The chain runs to 344 residues: Cell cycle control protein 50C (344 aa).

The Cytoplasmic segment spans residues 1–34 (MEETPQHCLSRLPDNSALKQQELPAHRLYFTARR). The chain crosses the membrane as a helical span at residues 35–55 (VLFVFFTTGIFCLCMGIILIL). Over 56 to 306 (SARSTQEIEI…STLTWCGGNS (251 aa)) the chain is Extracellular. N-linked (GlcNAc...) asparagine glycosylation is found at Asn66 and Asn261. Residues 307–327 (LFLGLAYTVTGAITWLASFTM) traverse the membrane as a helical segment. Over 328-344 (MAIHITLKNKQMSFFHQ) the chain is Cytoplasmic.

It belongs to the CDC50/LEM3 family. Specifically expressed in testis.

It is found in the membrane. This Macaca fascicularis (Crab-eating macaque) protein is Cell cycle control protein 50C (TMEM30C).